The primary structure comprises 377 residues: DNA methyltransferase CcrM (377 aa).

Positions 271–373 constitute an RAMA domain; it reads LGKAELTVMT…LRKIIREQMA (103 aa).

This sequence belongs to the N(4)/N(6)-methyltransferase family.

The catalysed reaction is a 2'-deoxyadenosine in DNA + S-adenosyl-L-methionine = an N(6)-methyl-2'-deoxyadenosine in DNA + S-adenosyl-L-homocysteine + H(+). Functionally, a beta subtype methylase that recognizes the double-stranded sequence 5'-GANTC-3' and methylates on A-2 on both strands. Overexpression from a moderate-copy number plasmid (10-12 copies/cell) leads to enlarged, branched cells, many with 3-5 genome equivalents. Contributes to the accurate cell-cycle control of DNA replication and cellular morphology. The chain is DNA methyltransferase CcrM from Brucella abortus (strain 2308).